The primary structure comprises 358 residues: NADH-quinone oxidoreductase subunit H (358 aa).

Transmembrane regions (helical) follow at residues 20-40 (ITVG…IPLI), 95-115 (ALFY…WAVI), 128-148 (IGLL…IIAG), 168-188 (ISYE…SGSM), 206-226 (VFSW…ISAV), 253-273 (GFAF…IAAL), 295-315 (TPSA…YLWI), and 334-354 (VLIP…ISPL).

The protein belongs to the complex I subunit 1 family. In terms of assembly, NDH-1 is composed of 14 different subunits. Subunits NuoA, H, J, K, L, M, N constitute the membrane sector of the complex.

It localises to the cell inner membrane. The catalysed reaction is a quinone + NADH + 5 H(+)(in) = a quinol + NAD(+) + 4 H(+)(out). NDH-1 shuttles electrons from NADH, via FMN and iron-sulfur (Fe-S) centers, to quinones in the respiratory chain. The immediate electron acceptor for the enzyme in this species is believed to be ubiquinone. Couples the redox reaction to proton translocation (for every two electrons transferred, four hydrogen ions are translocated across the cytoplasmic membrane), and thus conserves the redox energy in a proton gradient. This subunit may bind ubiquinone. In Neisseria meningitidis serogroup B (strain ATCC BAA-335 / MC58), this protein is NADH-quinone oxidoreductase subunit H.